Here is a 104-residue protein sequence, read N- to C-terminus: Large ribosomal subunit protein uL24 (104 aa).

This sequence belongs to the universal ribosomal protein uL24 family. As to quaternary structure, part of the 50S ribosomal subunit.

Functionally, one of two assembly initiator proteins, it binds directly to the 5'-end of the 23S rRNA, where it nucleates assembly of the 50S subunit. One of the proteins that surrounds the polypeptide exit tunnel on the outside of the subunit. This chain is Large ribosomal subunit protein uL24, found in Bartonella tribocorum (strain CIP 105476 / IBS 506).